A 424-amino-acid polypeptide reads, in one-letter code: UPF0597 protein Sbal223_1296 (424 aa).

This sequence belongs to the UPF0597 family.

The sequence is that of UPF0597 protein Sbal223_1296 from Shewanella baltica (strain OS223).